The chain runs to 344 residues: MSYALLRPFLFNLDPEHAHELTLQLLEKAHKARALGFIYSQQSLPTECMGLQFSNPVGLAAGLDKNGQYIDALAELGFGFIEVGTVTPRPQQGNEKPRLFRIKEADAIINRMGFNNLGVDRLIQNVQRAKYKGNIGINIGKNAVTPVENAADDYIYCLDRVYPHASYITVNISSPNTKNLRDLQSGEALTELLDSIKNRHSQLATEYGFYVPMVLKVAPDLTPEQVDYIANQLIEFDIDGLIATNTTLSRTGVEDLPFGDEAGGLSGRPVGHLSTQIIEQFYERLEGKVPIIGVGGIDSGDKAVRKLNAGATMIQLYSGMIYQGPKLVQQCVEAITSHRDAMML.

FMN-binding positions include 61-65 and Thr-85; that span reads AGLDK. Lys-65 contributes to the substrate binding site. Residue 110-114 coordinates substrate; that stretch reads NRMGF. Residues Asn-138 and Asn-171 each contribute to the FMN site. Position 171 (Asn-171) interacts with substrate. Residue Ser-174 is the Nucleophile of the active site. Asn-176 is a substrate binding site. Lys-216 and Thr-244 together coordinate FMN. Residue 245–246 participates in substrate binding; sequence NT. FMN contacts are provided by residues Gly-267, Gly-296, and 317 to 318; that span reads YS.

The protein belongs to the dihydroorotate dehydrogenase family. Type 2 subfamily. As to quaternary structure, monomer. It depends on FMN as a cofactor.

The protein resides in the cell membrane. It catalyses the reaction (S)-dihydroorotate + a quinone = orotate + a quinol. The protein operates within pyrimidine metabolism; UMP biosynthesis via de novo pathway; orotate from (S)-dihydroorotate (quinone route): step 1/1. In terms of biological role, catalyzes the conversion of dihydroorotate to orotate with quinone as electron acceptor. This is Dihydroorotate dehydrogenase (quinone) from Psychrobacter sp. (strain PRwf-1).